Reading from the N-terminus, the 262-residue chain is Taurine import ATP-binding protein TauB (262 aa).

The ABC transporter domain maps to 4–233 (LELERISAQY…RYAAGESARA (230 aa)). 38-45 (GPSGSGKT) provides a ligand contact to ATP.

This sequence belongs to the ABC transporter superfamily. Taurine importer (TC 3.A.1.17.1) family. The complex is composed of two ATP-binding proteins (TauB), two transmembrane proteins (TauC) and a solute-binding protein (TauA).

It is found in the cell inner membrane. The catalysed reaction is taurine(out) + ATP + H2O = taurine(in) + ADP + phosphate + H(+). In terms of biological role, part of the ABC transporter complex TauABC involved in taurine import. Responsible for energy coupling to the transport system. This Pseudomonas putida (strain ATCC 47054 / DSM 6125 / CFBP 8728 / NCIMB 11950 / KT2440) protein is Taurine import ATP-binding protein TauB.